The chain runs to 302 residues: Glutamate/aspartate import solute-binding protein (302 aa).

The first 22 residues, 1–22, serve as a signal peptide directing secretion; sequence MQLRKPATAILALALSAGLAQA.

This sequence belongs to the bacterial solute-binding protein 3 family. In terms of assembly, the complex is composed of two ATP-binding proteins (GltL), two transmembrane proteins (GltJ and GltK) and a solute-binding protein (GltI).

It localises to the periplasm. Functionally, part of the ABC transporter complex GltIJKL involved in glutamate and aspartate uptake. Binds to both glutamate and aspartate. The sequence is that of Glutamate/aspartate import solute-binding protein (gltI) from Escherichia coli (strain K12).